The primary structure comprises 218 residues: Thiopurine S-methyltransferase (218 aa).

S-adenosyl-L-methionine is bound by residues W10, L45, E66, and R123.

The protein belongs to the class I-like SAM-binding methyltransferase superfamily. TPMT family.

The protein resides in the cytoplasm. It catalyses the reaction S-adenosyl-L-methionine + a thiopurine = S-adenosyl-L-homocysteine + a thiopurine S-methylether.. In Shewanella sp. (strain ANA-3), this protein is Thiopurine S-methyltransferase.